The following is a 239-amino-acid chain: Uridylate kinase (239 aa).

12–15 is an ATP binding site; sequence KLSG. Glycine 54 contributes to the UMP binding site. Glycine 55 and arginine 59 together coordinate ATP. UMP-binding positions include aspartate 74 and 135-142; that span reads TGNPYFTT. ATP contacts are provided by threonine 162, tyrosine 168, and aspartate 171.

The protein belongs to the UMP kinase family. As to quaternary structure, homohexamer.

It localises to the cytoplasm. It carries out the reaction UMP + ATP = UDP + ADP. It functions in the pathway pyrimidine metabolism; CTP biosynthesis via de novo pathway; UDP from UMP (UMPK route): step 1/1. Its activity is regulated as follows. Inhibited by UTP. Functionally, catalyzes the reversible phosphorylation of UMP to UDP. The sequence is that of Uridylate kinase from Fusobacterium nucleatum subsp. nucleatum (strain ATCC 25586 / DSM 15643 / BCRC 10681 / CIP 101130 / JCM 8532 / KCTC 2640 / LMG 13131 / VPI 4355).